The chain runs to 444 residues: Serine--tRNA ligase (444 aa).

248–250 lines the L-serine pocket; the sequence is TSE. 279-281 contributes to the ATP binding site; that stretch reads RSE. An L-serine-binding site is contributed by Glu302. Position 366–369 (366–369) interacts with ATP; that stretch reads EISS. Residue Ser401 participates in L-serine binding.

This sequence belongs to the class-II aminoacyl-tRNA synthetase family. Type-1 seryl-tRNA synthetase subfamily. In terms of assembly, homodimer. The tRNA molecule binds across the dimer.

The protein resides in the cytoplasm. The enzyme catalyses tRNA(Ser) + L-serine + ATP = L-seryl-tRNA(Ser) + AMP + diphosphate + H(+). The catalysed reaction is tRNA(Sec) + L-serine + ATP = L-seryl-tRNA(Sec) + AMP + diphosphate + H(+). It participates in aminoacyl-tRNA biosynthesis; selenocysteinyl-tRNA(Sec) biosynthesis; L-seryl-tRNA(Sec) from L-serine and tRNA(Sec): step 1/1. In terms of biological role, catalyzes the attachment of serine to tRNA(Ser). Is also able to aminoacylate tRNA(Sec) with serine, to form the misacylated tRNA L-seryl-tRNA(Sec), which will be further converted into selenocysteinyl-tRNA(Sec). The protein is Serine--tRNA ligase of Polaromonas naphthalenivorans (strain CJ2).